The primary structure comprises 441 residues: Tryptophan aminotransferase-related protein 1 (441 aa).

Pyridoxal 5'-phosphate-binding positions include tyrosine 110, 152 to 153, asparagine 219, 239 to 242, 262 to 265, and arginine 273; these read ST, DLAY, and TVSK. Lysine 265 is subject to N6-(pyridoxal phosphate)lysine.

The protein belongs to the alliinase family. It depends on pyridoxal 5'-phosphate as a cofactor. As to expression, highly expressed in anthers. Expressed at low levels in ovaries.

It catalyses the reaction L-tryptophan + 2-oxoglutarate = indole-3-pyruvate + L-glutamate. It participates in plant hormone metabolism; auxin biosynthesis. Its function is as follows. Probable tryptophan aminotransferase that may be involved in the regulation of auxin production in developing rice grains. The sequence is that of Tryptophan aminotransferase-related protein 1 from Oryza sativa subsp. japonica (Rice).